The chain runs to 730 residues: Arginine decarboxylase 1B, chloroplastic (730 aa).

Residues methionine 1–proline 37 constitute a chloroplast transit peptide. Position 157 is an N6-(pyridoxal phosphate)lysine (lysine 157). Residues serine 309, glycine 346, and glutamate 395–arginine 398 contribute to the pyridoxal 5'-phosphate site. Tyrosine 460–alanine 461 provides a ligand contact to substrate. The Proton donor; shared with dimeric partner role is filled by cysteine 548. Position 549 (aspartate 549) interacts with substrate. Position 590 (tyrosine 590) interacts with pyridoxal 5'-phosphate.

It belongs to the Orn/Lys/Arg decarboxylase class-II family. SpeA subfamily. Mg(2+) is required as a cofactor. The cofactor is pyridoxal 5'-phosphate.

The protein resides in the plastid. Its subcellular location is the chloroplast. It carries out the reaction L-arginine + H(+) = agmatine + CO2. It functions in the pathway alkaloid biosynthesis; nicotine biosynthesis. Its pathway is amine and polyamine biosynthesis; agmatine biosynthesis; agmatine from L-arginine: step 1/1. Functionally, involved in the biosynthesis of pyridine alkaloid natural products, leading mainly to the production of anabasine, anatabine, nicotine and nornicotine, effective deterrents against herbivores with antiparasitic and pesticide properties (neurotoxins); nornicotine serves as the precursor in the synthesis of the carcinogen compound N'-nitrosonornicotine (NNN). Required for the biosynthesis of putrescine. Catalyzes the first step of polyamine (PA) biosynthesis to produce putrescine from arginine. The polypeptide is Arginine decarboxylase 1B, chloroplastic (Nicotiana tabacum (Common tobacco)).